The primary structure comprises 259 residues: Emerin (259 aa).

Methionine 1 carries the N-acetylmethionine modification. Positions 1 to 45 (MDDYAVLSDTELAAVLRQYNIPHGPIVGSTRKLYEKKIFEYETQR) constitute an LEM domain. Serine 8, serine 29, serine 54, serine 72, serine 88, serine 99, serine 141, and serine 142 each carry phosphoserine. The interval 46–223 (RRLLPPNSSS…PAAALGQDRQ (178 aa)) is interaction with F-actin. Tyrosine 161 is modified (phosphotyrosine). Residues 168–187 (RPISNVSRSSLGLSYYPTSS) are interaction with CTNNB1. Phosphoserine occurs at positions 171, 174, and 176. The chain crosses the membrane as a helical span at residues 224 to 244 (VPLWGQLLLFLVFAAFLLFVY).

Interacts with lamins A and C, BANF1, GMCL, BCLAF1 and YTHDC1/YT521. Interacts with TMEM43; the interaction retains emerin in the inner nuclear membrane. Interacts with ACTB, SPTAN1, F-actin, CTNNB1 and beta-tubulin. Interacts with SUN1 and SUN2. Interacts with TMEM201. Interacts with NEMP1. In the ovary, highest expression is seen in primordial follicle oocytes (at protein level). Detected in embryonic fibroblasts, skeletal muscle, heart muscle and tongue epithelium (at protein level). Widely expressed.

The protein resides in the nucleus inner membrane. It localises to the nucleus outer membrane. Stabilizes and promotes the formation of a nuclear actin cortical network. Stimulates actin polymerization in vitro by binding and stabilizing the pointed end of growing filaments. Inhibits beta-catenin activity by preventing its accumulation in the nucleus. Acts by influencing the nuclear accumulation of beta-catenin through a CRM1-dependent export pathway. Links centrosomes to the nuclear envelope via a microtubule association. Required for proper localization of non-farnesylated prelamin-A/C. Together with NEMP1, contributes to nuclear envelope stiffness in germ cells. This Mus musculus (Mouse) protein is Emerin (Emd).